The following is a 187-amino-acid chain: Ribosome-recycling factor (187 aa).

The protein belongs to the RRF family.

The protein localises to the cytoplasm. Functionally, responsible for the release of ribosomes from messenger RNA at the termination of protein biosynthesis. May increase the efficiency of translation by recycling ribosomes from one round of translation to another. The polypeptide is Ribosome-recycling factor (Ruegeria pomeroyi (strain ATCC 700808 / DSM 15171 / DSS-3) (Silicibacter pomeroyi)).